The sequence spans 175 residues: ATP synthase subunit delta (175 aa).

This sequence belongs to the ATPase delta chain family. F-type ATPases have 2 components, F(1) - the catalytic core - and F(0) - the membrane proton channel. F(1) has five subunits: alpha(3), beta(3), gamma(1), delta(1), epsilon(1). F(0) has three main subunits: a(1), b(2) and c(10-14). The alpha and beta chains form an alternating ring which encloses part of the gamma chain. F(1) is attached to F(0) by a central stalk formed by the gamma and epsilon chains, while a peripheral stalk is formed by the delta and b chains.

Its subcellular location is the cell inner membrane. Functionally, f(1)F(0) ATP synthase produces ATP from ADP in the presence of a proton or sodium gradient. F-type ATPases consist of two structural domains, F(1) containing the extramembraneous catalytic core and F(0) containing the membrane proton channel, linked together by a central stalk and a peripheral stalk. During catalysis, ATP synthesis in the catalytic domain of F(1) is coupled via a rotary mechanism of the central stalk subunits to proton translocation. Its function is as follows. This protein is part of the stalk that links CF(0) to CF(1). It either transmits conformational changes from CF(0) to CF(1) or is implicated in proton conduction. The sequence is that of ATP synthase subunit delta from Xylella fastidiosa (strain M12).